A 331-amino-acid chain; its full sequence is Phenylalanine--tRNA ligase alpha subunit (331 aa).

Glu258 lines the Mg(2+) pocket.

Belongs to the class-II aminoacyl-tRNA synthetase family. Phe-tRNA synthetase alpha subunit type 1 subfamily. As to quaternary structure, tetramer of two alpha and two beta subunits. Requires Mg(2+) as cofactor.

It is found in the cytoplasm. It carries out the reaction tRNA(Phe) + L-phenylalanine + ATP = L-phenylalanyl-tRNA(Phe) + AMP + diphosphate + H(+). This Synechocystis sp. (strain ATCC 27184 / PCC 6803 / Kazusa) protein is Phenylalanine--tRNA ligase alpha subunit (pheS).